The primary structure comprises 784 residues: uncharacterized protein (784 aa).

The region spanning 422-619 (IRIVQNEQDL…EVFQKIVEVV (198 aa)) is the 3'-5' exonuclease domain.

This is an uncharacterized protein from Caenorhabditis elegans.